We begin with the raw amino-acid sequence, 88 residues long: Metastasis-suppressor KiSS-1 (88 aa).

A compositionally biased stretch (polar residues) spans 1-13 (SVENSRPTGQQLE). Residues 1-88 (SVENSRPTGQ…REKDLPNYNW (88 aa)) form a disordered region. A compositionally biased stretch (low complexity) spans 33–55 (SATARLSRRGASLSSPAESSGSP). Positions 78 to 88 (QREKDLPNYNW) are enriched in basic and acidic residues. Tyr-86 is modified (phosphotyrosine).

This sequence belongs to the KISS1 family. In terms of tissue distribution, in the hypothalamus, expression increases with puberty in both male and female monkeys. Robust expression in the region of the arcuate nucleus (ARC).

The protein localises to the secreted. Functionally, metastasis suppressor protein. May regulate events downstream of cell-matrix adhesion, perhaps involving cytoskeletal reorganization. Generates a C-terminally amidated peptide, metastin which functions as the endogenous ligand of the G-protein coupled receptor GPR54. The receptor is essential for normal gonadotropin-released hormone physiology and for puberty. The hypothalamic KiSS1/GPR54 system is a pivotal factor in central regulation of the gonadotropic axis at puberty and in adulthood. In Macaca mulatta (Rhesus macaque), this protein is Metastasis-suppressor KiSS-1 (KISS1).